A 157-amino-acid chain; its full sequence is Protein Smg homolog (157 aa).

The protein belongs to the Smg family.

This chain is Protein Smg homolog, found in Alkalilimnicola ehrlichii (strain ATCC BAA-1101 / DSM 17681 / MLHE-1).